The following is a 205-amino-acid chain: Protein phosphatase inhibitor 2 family member B (205 aa).

The disordered stretch occupies residues 1-44 (MAASTASHRPIKGILKNKTSTTSSMVASAEQPRRSVDEELSKKS). Position 2 is an N-acetylalanine (Ala2). Required for binding PPP1CC stretches follow at residues 12–17 (KGILKN) and 43–55 (KSQKWDEINILAT). The segment covering 17-26 (NKTSTTSSMV) has biased composition (polar residues). The span at 31–44 (QPRRSVDEELSKKS) shows a compositional bias: basic and acidic residues. Ser44 is subject to Phosphoserine. Phosphothreonine occurs at positions 89 and 92. Residues 111–142 (EPKYRIQEQESSGEEDSDLSPEEREKKRQFEM) are disordered. Ser121, Ser122, Ser127, and Ser130 each carry phosphoserine. Residues 121–130 (SSGEEDSDLS) are compositionally biased toward acidic residues. A compositionally biased stretch (basic and acidic residues) spans 131–142 (PEEREKKRQFEM). Positions 147 to 150 (HYNE) are required for binding PPP1CC catalytic center, displacing metal ions and inhibition of PPP1CC catalytic activity. The tract at residues 163-205 (KDLHDDDEDEEMLETADGESMNTEESNQGSTPSDQQQNKLRSS) is disordered. The span at 167–179 (DDDEDEEMLETAD) shows a compositional bias: acidic residues. Over residues 182–205 (SMNTEESNQGSTPSDQQQNKLRSS) the composition is skewed to polar residues.

The protein belongs to the protein phosphatase inhibitor 2 family. Interacts with PPP1CC. Only detected in spermatozoa, both heads and tails.

Inhibitor of protein-phosphatase 1. This Homo sapiens (Human) protein is Protein phosphatase inhibitor 2 family member B.